The following is a 227-amino-acid chain: Putative ankyrin repeat protein L45 (227 aa).

6 ANK repeats span residues 38 to 66 (FETN…NINH), 78 to 107 (CLEE…NIFH), 108 to 137 (NENC…DVRA), 139 to 167 (NDYA…DVRS), 168 to 197 (CDSY…NYRA), and 199 to 227 (NHHA…GITK).

This Acanthamoeba polyphaga mimivirus (APMV) protein is Putative ankyrin repeat protein L45.